A 196-amino-acid polypeptide reads, in one-letter code: Large ribosomal subunit protein bL17 (196 aa).

Positions alanine 133–lysine 196 are disordered. The span at alanine 134–alanine 143 shows a compositional bias: basic and acidic residues. A compositionally biased stretch (acidic residues) spans glutamate 152–alanine 164. The segment covering alanine 184 to lysine 196 has biased composition (basic and acidic residues).

Belongs to the bacterial ribosomal protein bL17 family. As to quaternary structure, part of the 50S ribosomal subunit. Contacts protein L32.

This Arthrobacter sp. (strain FB24) protein is Large ribosomal subunit protein bL17.